The chain runs to 205 residues: Ras-related protein rab-6.2 (205 aa).

Residues 18-25 (EQSVGKTS), Thr42, 66-70 (TAGQE), and 124-127 (KTDL) contribute to the GTP site. Residues Cys203 and Cys205 are each lipidated (S-geranylgeranyl cysteine). At Cys205 the chain carries Cysteine methyl ester.

This sequence belongs to the small GTPase superfamily. Rab family. Interacts with GARP complex component vps-52. Interacts (in GTP-bound form) with lin-10. May interact (in GTP-bound form) with eat-17. As to expression, highly expressed in body wall muscles, pharyngeal and vulval muscles, hypodermis, intestine, the gonad, coelomocytes, and neurons, including command interneuron (at protein level). Highly expressed in the terminal bulb muscles.

Its subcellular location is the perikaryon. It localises to the cell projection. The protein resides in the dendrite. It is found in the golgi apparatus. The protein localises to the cytoplasmic vesicle. In terms of biological role, the small GTPases Rab are key regulators of intracellular membrane trafficking, from the formation of transport vesicles to their fusion with membranes. Rabs cycle between an inactive GDP-bound form and an active GTP-bound form that is able to recruit to membranes different set of downstream effectors directly responsible for vesicle formation, movement, tethering and fusion. In its active GTP-bound form, acts redundantly with rab-6.1 (in its active GTP-bound form) to positively regulate the retrograde trafficking of cargo molecules from endosomes to the Golgi compartment. Required for the retrograde trafficking of glr-1, a subunit of AMPA-type glutamate receptors (AMPRs), out of early endosomes and into the Golgi compartment in neurons. Its role in glr-1 trafficking may partly be mediated by its interaction with lin-10 and association with components of the retromer complex such as rme-8. Together with rab-6.2, promotes the retrograde trafficking of mig-14 from endosomes to Golgi structures in the intestine. Plays a role in the epidermis to promote cuticle integrity and impermeability of the cuticle barrier to exogenous molecules. May have a role in the glycosylation of the cuticular surface. Required for seam cell division and alae formation. Required for grinder formation, which is the feeding organ that breaks down food. In contrast to rab-6.1, may play a minor role in the exocytosis of secretory vesicles (cortical granules) during the oocyte-to-embryo transition. In Caenorhabditis elegans, this protein is Ras-related protein rab-6.2.